We begin with the raw amino-acid sequence, 297 residues long: Bifunctional protein FolD (297 aa).

Residues 166–168, S191, and I232 each bind NADP(+); that span reads GRS.

The protein belongs to the tetrahydrofolate dehydrogenase/cyclohydrolase family. Homodimer.

The catalysed reaction is (6R)-5,10-methylene-5,6,7,8-tetrahydrofolate + NADP(+) = (6R)-5,10-methenyltetrahydrofolate + NADPH. It catalyses the reaction (6R)-5,10-methenyltetrahydrofolate + H2O = (6R)-10-formyltetrahydrofolate + H(+). It functions in the pathway one-carbon metabolism; tetrahydrofolate interconversion. Its function is as follows. Catalyzes the oxidation of 5,10-methylenetetrahydrofolate to 5,10-methenyltetrahydrofolate and then the hydrolysis of 5,10-methenyltetrahydrofolate to 10-formyltetrahydrofolate. The sequence is that of Bifunctional protein FolD from Phenylobacterium zucineum (strain HLK1).